A 149-amino-acid chain; its full sequence is Gamma-glutamylaminecyclotransferase (149 aa).

A substrate-binding site is contributed by 7 to 10; the sequence is YGTL. Glu82 functions as the Proton acceptor in the catalytic mechanism.

This sequence belongs to the gamma-glutamylcyclotransferase family. As to quaternary structure, monomer.

It carries out the reaction epsilon-(gamma-L-glutamyl)-L-lysine = 5-oxo-L-proline + L-lysine. Contributes to degradation of proteins cross-linked by transglutaminases by degrading the cross-link between a lysine and a glutamic acid residue. Catalyzes the formation of 5-oxo-L-proline from L-gamma-glutamyl-L-epsilon-lysine. Inactive with L-gamma-glutamyl-alpha-amino acid substrates such as L-gamma-glutamyl-L-alpha-cysteine and L-gamma-glutamyl-L-alpha-alanine. This chain is Gamma-glutamylaminecyclotransferase (Ggact), found in Rattus norvegicus (Rat).